The chain runs to 260 residues: Flap endonuclease Xni (260 aa).

Residue Asp104 participates in Mg(2+) binding. A 5'-3' exonuclease domain is found at 160 to 250 (VSPQQLTDYW…NGNLQQLRLP (91 aa)). Positions 171, 172, 180, 182, and 185 each coordinate K(+). An interaction with DNA region spans residues 184–189 (GIGPKS).

The protein belongs to the Xni family. The cofactor is Mg(2+). Requires K(+) as cofactor.

Has flap endonuclease activity. During DNA replication, flap endonucleases cleave the 5'-overhanging flap structure that is generated by displacement synthesis when DNA polymerase encounters the 5'-end of a downstream Okazaki fragment. The sequence is that of Flap endonuclease Xni from Pectobacterium atrosepticum (strain SCRI 1043 / ATCC BAA-672) (Erwinia carotovora subsp. atroseptica).